The primary structure comprises 448 residues: tRNA-2-methylthio-N(6)-dimethylallyladenosine synthase (448 aa).

One can recognise an MTTase N-terminal domain in the interval 3-118 (KKVFIKTFGC…LPELLNARAA (116 aa)). [4Fe-4S] cluster-binding residues include cysteine 12, cysteine 49, cysteine 81, cysteine 155, cysteine 159, and cysteine 162. The Radical SAM core domain maps to 141-374 (RVEGASAFVS…QAVINRNILE (234 aa)). Residues 377–440 (QERVGTVQRL…TYTLRGEVVM (64 aa)) form the TRAM domain.

The protein belongs to the methylthiotransferase family. MiaB subfamily. In terms of assembly, monomer. The cofactor is [4Fe-4S] cluster.

It localises to the cytoplasm. The enzyme catalyses N(6)-dimethylallyladenosine(37) in tRNA + (sulfur carrier)-SH + AH2 + 2 S-adenosyl-L-methionine = 2-methylsulfanyl-N(6)-dimethylallyladenosine(37) in tRNA + (sulfur carrier)-H + 5'-deoxyadenosine + L-methionine + A + S-adenosyl-L-homocysteine + 2 H(+). Its function is as follows. Catalyzes the methylthiolation of N6-(dimethylallyl)adenosine (i(6)A), leading to the formation of 2-methylthio-N6-(dimethylallyl)adenosine (ms(2)i(6)A) at position 37 in tRNAs that read codons beginning with uridine. This is tRNA-2-methylthio-N(6)-dimethylallyladenosine synthase from Acidovorax sp. (strain JS42).